A 266-amino-acid polypeptide reads, in one-letter code: Putative zinc finger protein 034R (266 aa).

The segment at 84-176 (SPTKSVDKAA…GPKRDSTQQP (93 aa)) is disordered. A compositionally biased stretch (basic and acidic residues) spans 88 to 100 (SVDKAAQKEKKMP). Polar residues-rich tracts occupy residues 105 to 119 (KPTT…QGIL) and 160 to 176 (GVSQ…TQQP). The C3H1-type zinc-finger motif lies at 180–192 (CKSVLKQAKCYFG).

Belongs to the IIV-6 077L family.

The polypeptide is Putative zinc finger protein 034R (Aedes vexans (Inland floodwater mosquito)).